The sequence spans 398 residues: Basic helix-loop-helix neural transcription factor TAP (398 aa).

2 disordered regions span residues 35 to 59 (ETEA…IPQP) and 102 to 144 (RATN…RSRS). Residues 127–141 (RPKRKYAVGKNRVTR) are compositionally biased toward basic residues. Positions 154-206 (FRRMKANDRERNRMHNLNDALEKLRVTLPSLPEETKLTKIEILRFAHNYIFAL) constitute a bHLH domain. 2 disordered regions span residues 265-333 (AQHQ…QQFS) and 361-398 (QQSS…APQV). Residues 307–333 (HQQQQQPHQPHHLQPNPQQESSPQQFS) are compositionally biased toward low complexity. Residues 361-370 (QQSSFYSQTP) show a composition bias toward polar residues.

In terms of tissue distribution, expressed in neuronal and glial precursors during differentiation. In the peripheral nervous system, expression is exclusively in one of the neurons that innervate each larval chemosensory organ. Expressed at a late stage in the development of one type of adult chemosensory organ, the gustatory bristles of the leg, wing and proboscis. Expressed very early in the development of a second type of chemosensory receptors, the olfactory organs of the antenna.

Its subcellular location is the nucleus. May play a role in the specification of the sugar-sensitive adult gustatory neuron and affect the response to sugar and salt. Regulated by POXN. The sequence is that of Basic helix-loop-helix neural transcription factor TAP (tap) from Drosophila melanogaster (Fruit fly).